We begin with the raw amino-acid sequence, 305 residues long: Tyrosine recombinase XerC (305 aa).

The 94-residue stretch at 1-94 (MSSVDEFLTY…ACRSYYAWLL (94 aa)) folds into the Core-binding (CB) domain. One can recognise a Tyr recombinase domain in the interval 115–292 (KLPQVLDADE…DFQHLAKVYD (178 aa)). Active-site residues include arginine 154, lysine 178, histidine 244, arginine 247, and histidine 270. Tyrosine 279 serves as the catalytic O-(3'-phospho-DNA)-tyrosine intermediate.

Belongs to the 'phage' integrase family. XerC subfamily. In terms of assembly, forms a cyclic heterotetrameric complex composed of two molecules of XerC and two molecules of XerD.

The protein localises to the cytoplasm. Functionally, site-specific tyrosine recombinase, which acts by catalyzing the cutting and rejoining of the recombining DNA molecules. The XerC-XerD complex is essential to convert dimers of the bacterial chromosome into monomers to permit their segregation at cell division. It also contributes to the segregational stability of plasmids. The polypeptide is Tyrosine recombinase XerC (Xanthomonas axonopodis pv. citri (strain 306)).